Consider the following 217-residue polypeptide: Cytokinin riboside 5'-monophosphate phosphoribohydrolase LOG7 (217 aa).

Residues Glu-79, 97-98 (RK), 114-120 (GYGTLEE), and Thr-126 each bind substrate.

Belongs to the LOG family. As to expression, expressed in roots and shoots. Detected in the epidermis of the root elongation zone, cotyledon and leaves, in trichomes and pollen.

The protein resides in the cytoplasm. It localises to the nucleus. It carries out the reaction N(6)-(dimethylallyl)adenosine 5'-phosphate + H2O = N(6)-dimethylallyladenine + D-ribose 5-phosphate. The catalysed reaction is 9-ribosyl-trans-zeatin 5'-phosphate + H2O = trans-zeatin + D-ribose 5-phosphate. Its function is as follows. Cytokinin-activating enzyme working in the direct activation pathway. Phosphoribohydrolase that converts inactive cytokinin nucleotides to the biologically active free-base forms. This Arabidopsis thaliana (Mouse-ear cress) protein is Cytokinin riboside 5'-monophosphate phosphoribohydrolase LOG7 (LOG7).